Reading from the N-terminus, the 961-residue chain is E4 ubiquitin-protein ligase UFD2 (961 aa).

Positions 880–954 (DVPDEFLDPL…LCFKKQKKEE (75 aa)) constitute a U-box domain.

The protein belongs to the ubiquitin conjugation factor E4 family. As to quaternary structure, interacts with CDC48. Interacts with the ubiquitin-like domain of RAD23 and DSK2. Interacts with PEX29.

It is found in the cytoplasm. The protein resides in the nucleus. The catalysed reaction is S-ubiquitinyl-[E2 ubiquitin-conjugating enzyme]-L-cysteine + [acceptor protein]-L-lysine = [E2 ubiquitin-conjugating enzyme]-L-cysteine + N(6)-ubiquitinyl-[acceptor protein]-L-lysine.. Its pathway is protein modification; protein ubiquitination. Its function is as follows. E4 ubiquitin chain-elongation enzyme specifically involved in polyubiquitin chain assembly. Binds to CDC48 and elongates mono- and diubiquitinated ERAD substrates presented by the UFD1-NPL4-CDC48/p97 (UNC) AAA ATPase complex to a chain length of 4 to 6 ubiquitin moieties. Delivers these polyubiquitinated substrates to RAD23 and DSK2, which target them to the proteasome. Has E3 ubiquitin-protein ligase activity, accepting ubiquitin from its cognate E2 ubiquitin-conjugating enzyme UBC4. Enhances ubiquitination at 'Lys-48', but not at 'Lys-29' of the Ub moiety. Promotes ubiquitin chain elongation at 'Lys-48' on the DOA10 substrate PEX29. Also involved in the proteolytic processing of the ER-bound transcription factor SPT23. This chain is E4 ubiquitin-protein ligase UFD2 (UFD2), found in Saccharomyces cerevisiae (strain ATCC 204508 / S288c) (Baker's yeast).